We begin with the raw amino-acid sequence, 402 residues long: MSKGRLFTSESVTEGHPDKICDAISDSVLDSLLAQDPRSRVAVETLVTTGQVHVVGEVTTSAKEAFADITNTVRHRILEVGYDSSDKGFDGTTCGVNIGIGAQSPDIAQGVDTAHETRVEGAGDPLDLQGAGDQGLMFGYAIKDTPELMPLPIALAHRLARRLTEVRKNGVLDYLRPDGKTQVTVQYDGVTPVRLDTVVLSTQHAEGIDLEGTLTPDIREKVVNTVLSDLNHDSMDTSDFRLLVNPTGKFVLGGPMGDAGLTGRKIIVDTYGGWARHGGGAFSGKDPSKVDRSAAYAMRWVAKNVVAAGLADRVEVQVAYAIGKAAPVGLFVETFGTETVDPAKIEKAITEVFDLRPGAIVRDLDLLRPIYAPTAAYGHFGRTDIDLPWERTDKADALKTAV.

His-16 is a binding site for ATP. Residue Asp-18 participates in Mg(2+) binding. Glu-44 is a K(+) binding site. L-methionine contacts are provided by Glu-57 and Gln-103. Residues 103–113 (QSPDIAQGVDT) are flexible loop. ATP contacts are provided by residues 178–180 (DGK), 249–250 (KF), Asp-258, 264–265 (RK), Ala-281, and Lys-285. Asp-258 is a binding site for L-methionine. Position 289 (Lys-289) interacts with L-methionine.

This sequence belongs to the AdoMet synthase family. As to quaternary structure, homotetramer; dimer of dimers. Requires Mg(2+) as cofactor. K(+) is required as a cofactor.

It is found in the cytoplasm. It carries out the reaction L-methionine + ATP + H2O = S-adenosyl-L-methionine + phosphate + diphosphate. It functions in the pathway amino-acid biosynthesis; S-adenosyl-L-methionine biosynthesis; S-adenosyl-L-methionine from L-methionine: step 1/1. Functionally, catalyzes the formation of S-adenosylmethionine (AdoMet) from methionine and ATP. The overall synthetic reaction is composed of two sequential steps, AdoMet formation and the subsequent tripolyphosphate hydrolysis which occurs prior to release of AdoMet from the enzyme. The polypeptide is S-adenosylmethionine synthase (Mycobacterium sp. (strain JLS)).